The primary structure comprises 1462 residues: DNA polymerase alpha catalytic subunit (1462 aa).

Disordered regions lie at residues 1-33 (MAPVHGDDSLSDSGSFVSSRARREKKSKKGRQE) and 98-123 (DLEDDALDADEKGKDGKARNKDKRNV). Residues 20 to 29 (RARREKKSKK) are compositionally biased toward basic residues. Residues 106 to 116 (ADEKGKDGKAR) are compositionally biased toward basic and acidic residues. Thr-174 is subject to Phosphothreonine. Phosphoserine is present on residues Ser-186, Ser-190, and Ser-209. Lys-224 is subject to N6-acetyllysine. Positions 232 to 251 (DVQVESTEEEQESGAMEFED) are disordered. Thr-406 is modified (phosphothreonine). Residues 650–715 (RINVCKAPHW…YHLSELVQQI (66 aa)) form a DNA-binding region. Residue Lys-970 is modified to N6-succinyllysine. Positions 1245–1376 (QFRVHHYHKD…TGPLCPACMK (132 aa)) are DNA-binding. Zn(2+) is bound by residues Cys-1283, Cys-1286, Cys-1310, Cys-1315, Cys-1348, Cys-1353, Cys-1371, and Cys-1374. The CysA-type zinc finger occupies 1283–1318 (CPTCGTENIYDNVFDGSGTDMEPSLYRCSNIDCKAS). Positions 1348-1374 (CEEPTCRNRTRHLPLQFSRTGPLCPAC) match the CysB motif motif.

The protein belongs to the DNA polymerase type-B family. As to quaternary structure, component of the alpha DNA polymerase complex (also known as the alpha DNA polymerase-primase complex) consisting of four subunits: the catalytic subunit POLA1, the regulatory subunit POLA2, and the primase complex subunits PRIM1 and PRIM2 respectively. Interacts with PARP1; this interaction functions as part of the control of replication fork progression. Interacts with MCM10 and WDHD1; these interactions recruit the polymerase alpha complex to the pre-replicative complex bound to DNA. Interacts with RPA1; this interaction stabilizes the replicative complex and reduces the misincorporation rate of DNA polymerase alpha by acting as a fidelity clamp. In terms of assembly, (Microbial infection) Interacts with SV40 Large T antigen; this interaction allows viral DNA replication. (Microbial infection) Interacts with herpes simplex virus 1/HHV-1 replication origin-binding protein UL9. Post-translationally, a 165 kDa form is probably produced by proteolytic cleavage at Lys-124.

It is found in the nucleus. Its subcellular location is the cytoplasm. The protein localises to the cytosol. The enzyme catalyses DNA(n) + a 2'-deoxyribonucleoside 5'-triphosphate = DNA(n+1) + diphosphate. With respect to regulation, autoinhibited in apo-primosome, where the zinc motif of POLA1 and oligonucleotide/olicosaccharide-binding domain of POLA2 are placed into the active site blocking RNA:DNA duplex entry. In terms of biological role, catalytic subunit of the DNA polymerase alpha complex (also known as the alpha DNA polymerase-primase complex) which plays an essential role in the initiation of DNA synthesis. During the S phase of the cell cycle, the DNA polymerase alpha complex (composed of a catalytic subunit POLA1, a regulatory subunit POLA2 and two primase subunits PRIM1 and PRIM2) is recruited to DNA at the replicative forks via direct interactions with MCM10 and WDHD1. The primase subunit of the polymerase alpha complex initiates DNA synthesis by oligomerising short RNA primers on both leading and lagging strands. These primers are initially extended by the polymerase alpha catalytic subunit and subsequently transferred to polymerase delta and polymerase epsilon for processive synthesis on the lagging and leading strand, respectively. The reason this transfer occurs is because the polymerase alpha has limited processivity and lacks intrinsic 3' exonuclease activity for proofreading error, and therefore is not well suited for replicating long complexes. In the cytosol, responsible for a substantial proportion of the physiological concentration of cytosolic RNA:DNA hybrids, which are necessary to prevent spontaneous activation of type I interferon responses. The sequence is that of DNA polymerase alpha catalytic subunit (POLA1) from Homo sapiens (Human).